The chain runs to 210 residues: Outer-membrane lipoprotein LolB (210 aa).

Positions 1–26 (MSKLKIDTKRRFSLLIALVLIISLSS) are cleaved as a signal peptide. Cys27 carries the N-palmitoyl cysteine lipid modification. Cys27 is lipidated: S-diacylglycerol cysteine.

The protein belongs to the LolB family. As to quaternary structure, monomer.

It localises to the cell outer membrane. Plays a critical role in the incorporation of lipoproteins in the outer membrane after they are released by the LolA protein. In Francisella tularensis subsp. novicida (strain U112), this protein is Outer-membrane lipoprotein LolB.